The primary structure comprises 110 residues: Small ribosomal subunit protein eS25 (110 aa).

A disordered region spans residues 1 to 38 (MGGKKKPTLSQLAKKAEKEKAQQAQKAKKEVKKEETPA). Positions 14-38 (KKAEKEKAQQAQKAKKEVKKEETPA) are enriched in basic and acidic residues.

Belongs to the eukaryotic ribosomal protein eS25 family.

This is Small ribosomal subunit protein eS25 (rps25e) from Pyrobaculum aerophilum (strain ATCC 51768 / DSM 7523 / JCM 9630 / CIP 104966 / NBRC 100827 / IM2).